We begin with the raw amino-acid sequence, 428 residues long: Spliceosome RNA helicase DDX39B (428 aa).

Residues 1–19 (MAENDVDNELLDYEEDEVE) are compositionally biased toward acidic residues. Residues 1-35 (MAENDVDNELLDYEEDEVENAAGGDGSEAPPKKDV) are disordered. Positions 45-73 (SGFRDFLLKPELLRAIVDCGFEHPSEVQH) match the Q motif motif. In terms of domain architecture, Helicase ATP-binding spans 76 to 249 (IPQAILGMDV…RKFMQDPMEI (174 aa)). 89 to 96 (AKSGMGKT) serves as a coordination point for ATP. The short motif at 196–199 (DECD) is the DECD box element. Residues 261-422 (GLQQYYVKLK…ELPDEIDISS (162 aa)) form the Helicase C-terminal domain.

This sequence belongs to the DEAD box helicase family. DECD subfamily. As to quaternary structure, component of the transcription/export (TREX) complex at least composed of ALYREF/THOC4, DDX39B, SARNP/CIP29, CHTOP and the THO subcomplex.

The protein resides in the nucleus. The protein localises to the nucleus speckle. It catalyses the reaction ATP + H2O = ADP + phosphate + H(+). Functionally, involved in nuclear export of spliced and unspliced mRNA. Component of the TREX complex which is thought to couple mRNA transcription, processing and nuclear export, and specifically associates with spliced mRNA and not with unspliced pre-mRNA. The TREX complex is recruited to spliced mRNAs by a transcription-independent mechanism, binds to mRNA upstream of the exon-junction complex (EJC) and is recruited in a splicing- and cap-dependent manner to a region near the 5' end of the mRNA where it functions in mRNA export to the cytoplasm via the TAP/NXF1 pathway. Involved in transcription elongation and genome stability. Splice factor that is required for the first ATP-dependent step in spliceosome assembly and for the interaction of U2 snRNP with the branchpoint. Has both RNA-stimulated ATP binding/hydrolysis activity and ATP-dependent RNA unwinding activity. Even with the stimulation of RNA, the ATPase activity is weak. Can only hydrolyze ATP but not other NTPs. The RNA stimulation of ATPase activity does not have a strong preference for the sequence and length of the RNA. However, ssRNA stimulates the ATPase activity much more strongly than dsRNA. Can unwind 5' or 3' overhangs or blunt end RNA duplexes in vitro. The ATPase and helicase activities are not influenced by U2AF2; the effect of ALYREF/THOC4 is reported conflictingly. This is Spliceosome RNA helicase DDX39B (DDX39B) from Gallus gallus (Chicken).